The chain runs to 315 residues: tRNA-dihydrouridine(16) synthase (315 aa).

FMN-binding positions include 7 to 9 (PME) and Q68. C98 serves as the catalytic Proton donor. FMN contacts are provided by residues K139, 200–202 (NGE), and 224–225 (GR).

It belongs to the Dus family. DusC subfamily. FMN is required as a cofactor.

The enzyme catalyses 5,6-dihydrouridine(16) in tRNA + NADP(+) = uridine(16) in tRNA + NADPH + H(+). It catalyses the reaction 5,6-dihydrouridine(16) in tRNA + NAD(+) = uridine(16) in tRNA + NADH + H(+). Catalyzes the synthesis of 5,6-dihydrouridine (D), a modified base found in the D-loop of most tRNAs, via the reduction of the C5-C6 double bond in target uridines. Specifically modifies U16 in tRNAs. The protein is tRNA-dihydrouridine(16) synthase of Shigella flexneri.